The chain runs to 55 residues: Large ribosomal subunit protein bL33 (55 aa).

This sequence belongs to the bacterial ribosomal protein bL33 family.

The polypeptide is Large ribosomal subunit protein bL33 (Xanthobacter autotrophicus (strain ATCC BAA-1158 / Py2)).